Reading from the N-terminus, the 596-residue chain is Arginine--tRNA ligase (596 aa).

The 'HIGH' region signature appears at 128–138 (ANPTSSLHVGH).

This sequence belongs to the class-I aminoacyl-tRNA synthetase family. Monomer.

The protein resides in the cytoplasm. The catalysed reaction is tRNA(Arg) + L-arginine + ATP = L-arginyl-tRNA(Arg) + AMP + diphosphate. This is Arginine--tRNA ligase from Acinetobacter baylyi (strain ATCC 33305 / BD413 / ADP1).